The chain runs to 160 residues: Cytochrome c-type biogenesis protein CcmE (160 aa).

The Cytoplasmic portion of the chain corresponds to Met-1 to Arg-7. Residues Ala-8 to Ala-28 traverse the membrane as a helical; Signal-anchor for type II membrane protein segment. Over Met-29–Pro-160 the chain is Periplasmic. Positions 122 and 126 each coordinate heme. The interval Trp-141 to Pro-160 is disordered.

Belongs to the CcmE/CycJ family.

It localises to the cell inner membrane. Its function is as follows. Heme chaperone required for the biogenesis of c-type cytochromes. Transiently binds heme delivered by CcmC and transfers the heme to apo-cytochromes in a process facilitated by CcmF and CcmH. The sequence is that of Cytochrome c-type biogenesis protein CcmE from Parvibaculum lavamentivorans (strain DS-1 / DSM 13023 / NCIMB 13966).